The primary structure comprises 105 residues: N(4)-acetylcytidine amidohydrolase (105 aa).

Positions 7–93 (TFFERFEHDI…VIAEIYPGLE (87 aa)) constitute an ASCH domain. Catalysis depends on lysine 21, which acts as the Proton acceptor. Residue threonine 24 is the Nucleophile of the active site. The active-site Proton donor is the glutamate 74.

It belongs to the N(4)-acetylcytidine amidohydrolase family.

It carries out the reaction N(4)-acetylcytidine + H2O = cytidine + acetate + H(+). The catalysed reaction is N(4)-acetyl-2'-deoxycytidine + H2O = 2'-deoxycytidine + acetate + H(+). It catalyses the reaction N(4)-acetylcytosine + H2O = cytosine + acetate + H(+). Functionally, catalyzes the hydrolysis of N(4)-acetylcytidine (ac4C). The chain is N(4)-acetylcytidine amidohydrolase from Shewanella baltica (strain OS223).